A 547-amino-acid polypeptide reads, in one-letter code: T-complex protein 1 subunit gamma (547 aa).

Gly41 contacts ADP. Gly41 lines the ATP pocket. Asp92 contributes to the Mg(2+) binding site. Residues Gly93, Thr94, Thr95, Ser96, Thr161, and Lys162 each coordinate ADP. Positions 93, 94, and 95 each coordinate ATP. Cysteines 365 and 371 form a disulfide. Residues Gly410, Gly481, Glu482, Glu496, and Lys501 each contribute to the ADP site. ATP contacts are provided by Gly410 and Gly481. Glu496 provides a ligand contact to ATP. Over residues His525 to Arg534 the composition is skewed to basic and acidic residues. Positions His525–Glu547 are disordered. Low complexity predominate over residues Gln535–Glu547.

The protein belongs to the TCP-1 chaperonin family. In terms of assembly, component of the chaperonin-containing T-complex (TRiC), a hexadecamer composed of two identical back-to-back stacked rings enclosing a protein folding chamber. Each ring is made up of eight different subunits: TCP1/CCT1, CCT2, CCT3, CCT4, CCT5, CCT6A/CCT6, CCT7, CCT8.

Its subcellular location is the cytoplasm. The catalysed reaction is ATP + H2O = ADP + phosphate + H(+). Component of the chaperonin-containing T-complex (TRiC), a molecular chaperone complex that assists the folding of actin, tubulin and other proteins upon ATP hydrolysis. The protein is T-complex protein 1 subunit gamma (cct3) of Xenopus laevis (African clawed frog).